A 280-amino-acid polypeptide reads, in one-letter code: Nucleotide-binding protein Mfla_0145 (280 aa).

ATP is bound at residue 8-15 (GLSGSGKS). 57–60 (DTRS) lines the GTP pocket.

Belongs to the RapZ-like family.

Its function is as follows. Displays ATPase and GTPase activities. This Methylobacillus flagellatus (strain ATCC 51484 / DSM 6875 / VKM B-1610 / KT) protein is Nucleotide-binding protein Mfla_0145.